The chain runs to 141 residues: Large ribosomal subunit protein uL11 (141 aa).

It belongs to the universal ribosomal protein uL11 family. As to quaternary structure, part of the ribosomal stalk of the 50S ribosomal subunit. Interacts with L10 and the large rRNA to form the base of the stalk. L10 forms an elongated spine to which L12 dimers bind in a sequential fashion forming a multimeric L10(L12)X complex. One or more lysine residues are methylated.

Functionally, forms part of the ribosomal stalk which helps the ribosome interact with GTP-bound translation factors. The polypeptide is Large ribosomal subunit protein uL11 (Prochlorococcus marinus (strain MIT 9515)).